We begin with the raw amino-acid sequence, 485 residues long: MSAIRTLHQQLIAKERSAVEILTETFAHIEAVEPKVKAFLTLTKEQALAQAAQVDAKIAAGETIGLLEGIPIAIKDNLCTKGIQTTCASRILEGFVPTYESTVTQELQEAGAIMVGKTNLDEFAMGSSTENSGYQVTGNPWDVTRVPGGSSGGSAAAVAAGEAPIALGSDTGGSIRQPASLCGVVGLKPTYGLVSRFGLVAYASSLDQIGPFARTVEDTAILLEAIAGHDPKDSTSLDVDIPQYSQLLQPELPKDKPLKIGIIQETFGEGLDPEVAEAVQKAIAQLQELGAEVETISCPRFRYGLPAYYIIAPSEASANLARYDAVKYGTRNAAADNLVDMYTQTRAAGFGPEVKRRIMLGTYTLSAGYYDAYYLKAQKVRTLIKKDFDQAFAKVDVLICPTSPSTAFKAGEKTDDPLSMYLSDLMTIPVNLAGLPALSLPCGFDAQGLPIGMQLIGNVLREDLLLQVAHVYEQATAWHQKQPQL.

Active-site charge relay system residues include K75 and S150. S174 serves as the catalytic Acyl-ester intermediate.

The protein belongs to the amidase family. GatA subfamily. Heterotrimer of A, B and C subunits.

The catalysed reaction is L-glutamyl-tRNA(Gln) + L-glutamine + ATP + H2O = L-glutaminyl-tRNA(Gln) + L-glutamate + ADP + phosphate + H(+). Functionally, allows the formation of correctly charged Gln-tRNA(Gln) through the transamidation of misacylated Glu-tRNA(Gln) in organisms which lack glutaminyl-tRNA synthetase. The reaction takes place in the presence of glutamine and ATP through an activated gamma-phospho-Glu-tRNA(Gln). The polypeptide is Glutamyl-tRNA(Gln) amidotransferase subunit A (Picosynechococcus sp. (strain ATCC 27264 / PCC 7002 / PR-6) (Agmenellum quadruplicatum)).